The sequence spans 54 residues: Large ribosomal subunit protein bL33 (54 aa).

It belongs to the bacterial ribosomal protein bL33 family.

In Petrotoga mobilis (strain DSM 10674 / SJ95), this protein is Large ribosomal subunit protein bL33.